The following is a 656-amino-acid chain: Histidine decarboxylase (656 aa).

Positions 84 and 197 each coordinate substrate. Residue Lys308 is modified to N6-(pyridoxal phosphate)lysine. Ser343 and Ser362 each carry phosphoserine; by PKA. The disordered stretch occupies residues 481-502 (HCTSQPSPRAKNLIPPPVTRDS).

It belongs to the group II decarboxylase family. In terms of assembly, homodimer. The cofactor is pyridoxal 5'-phosphate. Post-translationally, may be post-translationally processed. In terms of tissue distribution, brain, glandular regions of the stomach, mast cells and fetal liver.

It catalyses the reaction L-histidine + H(+) = histamine + CO2. It functions in the pathway amine and polyamine biosynthesis; histamine biosynthesis; histamine from L-histidine: step 1/1. With respect to regulation, phosphorylation of brain HDC by cAMP-dependent protein kinase leads to enzyme inactivation. Its function is as follows. Catalyzes the biosynthesis of histamine from histidine. The polypeptide is Histidine decarboxylase (Hdc) (Rattus norvegicus (Rat)).